The primary structure comprises 410 residues: WD repeat-containing protein jip5 (410 aa).

WD repeat units follow at residues 9–48 (PLSA…EEEH), 74–113 (RHKG…VENK), 119–160 (AKDG…SKVA), 223–264 (VSST…DQDE), 273–316 (GGGE…VVSE), and 320–357 (DETE…IGGE). Residues 41-65 (PTEEEEEHSDDEQASVSSSRNGKGH) are disordered. Residues 43-53 (EEEEEHSDDEQ) are compositionally biased toward acidic residues. The disordered stretch occupies residues 354-410 (IGGEKRGFGGDSDDSDDDSDDSDHEPKQGDDSRRKRKKQKGKDRGKGPEIMAFADLD). Residues 364–376 (DSDDSDDDSDDSD) are compositionally biased toward acidic residues. Positions 377 to 386 (HEPKQGDDSR) are enriched in basic and acidic residues.

It belongs to the WD repeat WDR55 family.

It localises to the nucleus. The protein resides in the nucleolus. This Emericella nidulans (strain FGSC A4 / ATCC 38163 / CBS 112.46 / NRRL 194 / M139) (Aspergillus nidulans) protein is WD repeat-containing protein jip5 (jip5).